Here is a 353-residue protein sequence, read N- to C-terminus: UDP-galactose transporter (353 aa).

6 consecutive transmembrane segments (helical) span residues 147–167, 184–204, 215–235, 254–274, 279–299, and 302–322; these read LGPM…IVQL, VTGF…GVYF, LWVR…FTIL, IVWL…LCVA, IMKN…SVYL, and FKIS…TFLY. Residues 325–353 form a disordered region; that stretch reads PESKPSPSRGTYIPMTTQDAAAKDVDHKH. The span at 329 to 343 shows a compositional bias: polar residues; it reads PSPSRGTYIPMTTQD.

It belongs to the nucleotide-sugar transporter family. SLC35A subfamily.

The protein localises to the golgi apparatus membrane. Functionally, essential for the transport of UDP-galactose into the lumen of Golgi apparatus. This is UDP-galactose transporter (gms1) from Schizosaccharomyces pombe (strain 972 / ATCC 24843) (Fission yeast).